Here is a 223-residue protein sequence, read N- to C-terminus: Large ribosomal subunit protein uL4c (223 aa).

A disordered region spans residues threonine 61–glycine 96.

This sequence belongs to the universal ribosomal protein uL4 family. As to quaternary structure, part of the 50S ribosomal subunit.

Its subcellular location is the plastid. It is found in the chloroplast. Probably binds the 23S rRNA. In Guillardia theta (Cryptophyte), this protein is Large ribosomal subunit protein uL4c (rpl4).